Reading from the N-terminus, the 123-residue chain is Protein Wnt-3b (123 aa).

Residue serine 1 is the site of O-palmitoleoyl serine; by PORCN attachment. A disulfide bond links cysteine 89 and cysteine 104. Asparagine 90 carries N-linked (GlcNAc...) asparagine glycosylation.

This sequence belongs to the Wnt family. Palmitoleoylation is required for efficient binding to frizzled receptors. Depalmitoleoylation leads to Wnt signaling pathway inhibition.

It is found in the secreted. It localises to the extracellular space. The protein localises to the extracellular matrix. Functionally, ligand for members of the frizzled family of seven transmembrane receptors. Probable developmental protein. May be a signaling molecule which affects the development of discrete regions of tissues. Is likely to signal over only few cell diameters. The polypeptide is Protein Wnt-3b (WNT3B) (Meleagris gallopavo (Wild turkey)).